The chain runs to 1178 residues: DNA-directed RNA polymerase subunit beta' (1178 aa).

Zn(2+)-binding residues include Cys-60, Cys-62, Cys-75, and Cys-78. Mg(2+) contacts are provided by Asp-450, Asp-452, and Asp-454. Zn(2+) contacts are provided by Cys-795, Cys-869, Cys-876, and Cys-879.

This sequence belongs to the RNA polymerase beta' chain family. In terms of assembly, the RNAP catalytic core consists of 2 alpha, 1 beta, 1 beta' and 1 omega subunit. When a sigma factor is associated with the core the holoenzyme is formed, which can initiate transcription. It depends on Mg(2+) as a cofactor. Requires Zn(2+) as cofactor.

The catalysed reaction is RNA(n) + a ribonucleoside 5'-triphosphate = RNA(n+1) + diphosphate. Its function is as follows. DNA-dependent RNA polymerase catalyzes the transcription of DNA into RNA using the four ribonucleoside triphosphates as substrates. This chain is DNA-directed RNA polymerase subunit beta', found in Clostridium beijerinckii (strain ATCC 51743 / NCIMB 8052) (Clostridium acetobutylicum).